Reading from the N-terminus, the 80-residue chain is Putative membrane protein insertion efficiency factor (80 aa).

It belongs to the UPF0161 family.

Its subcellular location is the cell membrane. Could be involved in insertion of integral membrane proteins into the membrane. The chain is Putative membrane protein insertion efficiency factor from Corynebacterium jeikeium (strain K411).